A 459-amino-acid chain; its full sequence is Ribulose bisphosphate carboxylase (459 aa).

Asn-111 is a binding site for substrate. Lys-166 acts as the Proton acceptor in catalysis. Position 168 (Lys-168) interacts with substrate. Lys-191, Asp-193, and Glu-194 together coordinate Mg(2+). Lys-191 is subject to N6-carboxylysine. His-287 serves as the catalytic Proton acceptor. Substrate-binding residues include Arg-288, His-321, and Ser-368.

It belongs to the RuBisCO large chain family. Type II subfamily. In terms of assembly, homodimer. Mg(2+) is required as a cofactor.

It catalyses the reaction 2 (2R)-3-phosphoglycerate + 2 H(+) = D-ribulose 1,5-bisphosphate + CO2 + H2O. It carries out the reaction D-ribulose 1,5-bisphosphate + O2 = 2-phosphoglycolate + (2R)-3-phosphoglycerate + 2 H(+). Functionally, ruBisCO catalyzes two reactions: the carboxylation of D-ribulose 1,5-bisphosphate, the primary event in carbon dioxide fixation, as well as the oxidative fragmentation of the pentose substrate. Both reactions occur simultaneously and in competition at the same active site. The chain is Ribulose bisphosphate carboxylase from Polaromonas naphthalenivorans (strain CJ2).